The primary structure comprises 235 residues: Protein YIP4 (235 aa).

The next 5 helical transmembrane spans lie at 89–109 (ISAN…SLFV), 114–134 (SLFS…ALHL), 145–165 (LISY…NALV), 186–206 (VLSL…VAAV), and 215–235 (IIEI…STIL).

It belongs to the YIP1 family. Interacts with TVP18, TVP23, YIP1 and YIP5. Interacts with SEC4, YPT1, YPT6, YPT7, YPT10, YPT11, YPT31, YPT32 and YPT52; These proteins are all Rab GTPases.

The protein localises to the golgi apparatus membrane. May be involved in proper membrane localization of Rab GTPases. The polypeptide is Protein YIP4 (YIP4) (Saccharomyces cerevisiae (strain ATCC 204508 / S288c) (Baker's yeast)).